The sequence spans 325 residues: Polyprenyl transferase mpaA (325 aa).

3 helical membrane passes run 27-47 (MPYY…ALKL), 56-76 (VEYI…LCGA), and 108-128 (VEAL…LDLI). Asparagine 131 carries N-linked (GlcNAc...) asparagine glycosylation. 6 helical membrane-spanning segments follow: residues 134-151 (IWGL…YPYL), 159-179 (VFIY…ITGW), 192-212 (IFTH…YFNT), 240-260 (LFLA…VLKI), 262-282 (SPWL…MQIV), and 295-315 (IHWD…VEVG).

It belongs to the UbiA prenyltransferase family. It depends on Mg(2+) as a cofactor.

The protein resides in the golgi apparatus membrane. The enzyme catalyses 5,7-dihydroxy-4-methylphthalide + (2E,6E)-farnesyl diphosphate = 4-farnesyl-3,5-dihydroxy-6-methylphthalide + diphosphate. Its pathway is secondary metabolite biosynthesis; terpenoid biosynthesis. In terms of biological role, polyprenyl transferase; part of the gene cluster that mediates the biosynthesis of mycophenolic acid (MPA), the first isolated antibiotic natural product in the world obtained from a culture of Penicillium brevicompactum in 1893. MpaA is a Golgi apparatus-associated enzyme that catalyzes the prenylation of 5,7-dihydroxy-4,6-dimethylphthalide (DHMP) to yield farnesyl-DHMP (FDHMP). The first step of the pathway is the synthesis of 5-methylorsellinic acid (5MOA) by the cytosolic polyketide synthase mpaC. 5MOA is then converted to the phthalide compound 5,7-dihydroxy-4,6-dimethylphthalide (DHMP) by the endoplasmic reticulum-bound cytochrome P450 monooxygenase mpaDE. MpaDE first catalyzes hydroxylation of 5-MOA to 4,6-dihydroxy-2-(hydroxymethyl)-3-methylbenzoic acid (DHMB). MpaDE then acts as a lactone synthase that catalyzes the ring closure to convert DHMB into DHMP. The next step is the prenylation of DHMP by the Golgi apparatus-associated prenyltransferase mpaA to yield farnesyl-DHMP (FDHMP). The ER-bound oxygenase mpaB then mediates the oxidative cleavage the C19-C20 double bond in FDHMP to yield FDHMP-3C via a mycophenolic aldehyde intermediate. The O-methyltransferase mpaG catalyzes the methylation of FDHMP-3C to yield MFDHMP-3C. After the cytosolic methylation of FDHMP-3C, MFDHMP-3C enters into peroxisomes probably via free diffusion due to its low molecular weight. Upon a peroxisomal CoA ligation reaction, catalyzed by a beta-oxidation component enzyme acyl-CoA ligase ACL891, MFDHMP-3C-CoA would then be restricted to peroxisomes for the following beta-oxidation pathway steps. The peroxisomal beta-oxidation machinery than converts MFDHMP-3C-CoA into MPA_CoA, via a beta-oxidation chain-shortening process. Finally mpaH acts as a peroxisomal acyl-CoA hydrolase with high substrate specificity toward MPA-CoA to release the final product MPA. The protein is Polyprenyl transferase mpaA of Penicillium roqueforti (strain FM164).